The primary structure comprises 138 residues: Putative pre-16S rRNA nuclease (138 aa).

Belongs to the YqgF nuclease family.

The protein localises to the cytoplasm. Could be a nuclease involved in processing of the 5'-end of pre-16S rRNA. The chain is Putative pre-16S rRNA nuclease from Salmonella dublin (strain CT_02021853).